We begin with the raw amino-acid sequence, 77 residues long: UPF0401 protein c0279 (77 aa).

It belongs to the UPF0401 family.

This is UPF0401 protein c0279 from Escherichia coli O6:H1 (strain CFT073 / ATCC 700928 / UPEC).